The following is a 154-amino-acid chain: Aspartate 1-decarboxylase 1 (154 aa).

Catalysis depends on serine 26, which acts as the Schiff-base intermediate with substrate; via pyruvic acid. Residue serine 26 is modified to Pyruvic acid (Ser). Threonine 58 lines the substrate pocket. Residue tyrosine 59 is the Proton donor of the active site. 74 to 76 lines the substrate pocket; sequence GAA. The disordered stretch occupies residues 129–154; that stretch reads VGLVRGDTNSPQPSLSEQAGDPRRAQ. A compositionally biased stretch (polar residues) spans 135 to 145; that stretch reads DTNSPQPSLSE.

It belongs to the PanD family. In terms of assembly, heterooctamer of four alpha and four beta subunits. Requires pyruvate as cofactor. Is synthesized initially as an inactive proenzyme, which is activated by self-cleavage at a specific serine bond to produce a beta-subunit with a hydroxyl group at its C-terminus and an alpha-subunit with a pyruvoyl group at its N-terminus.

It is found in the cytoplasm. The catalysed reaction is L-aspartate + H(+) = beta-alanine + CO2. Its pathway is cofactor biosynthesis; (R)-pantothenate biosynthesis; beta-alanine from L-aspartate: step 1/1. Functionally, catalyzes the pyruvoyl-dependent decarboxylation of aspartate to produce beta-alanine. The protein is Aspartate 1-decarboxylase 1 of Frankia casuarinae (strain DSM 45818 / CECT 9043 / HFP020203 / CcI3).